The chain runs to 112 residues: Mitochondrial import inner membrane translocase subunit TIM14-2 (112 aa).

A helical transmembrane segment spans residues 7 to 25; that stretch reads AGAAVAAAAYAGKYGIEAW. The 60-residue stretch at 53 to 112 folds into the J domain; sequence EAALILGVRESVAAEKVKEAHRRVMVANHPDAGGSHYLASKINEAKDMMLGKTKNSGSAF.

It belongs to the TIM14 family. Probable component of the PAM complex at least composed of a mitochondrial HSP70 protein, TIMM44 and TIMM14. The complex interacts with the TIMM23 component of the TIM17:23 complex.

The protein resides in the mitochondrion. Its subcellular location is the mitochondrion inner membrane. Functionally, component of the PAM complex, a complex required for the translocation of transit peptide-containing proteins from the inner membrane into the mitochondrial matrix in an ATP-dependent manner. This chain is Mitochondrial import inner membrane translocase subunit TIM14-2 (TIM14-2), found in Arabidopsis thaliana (Mouse-ear cress).